The following is a 449-amino-acid chain: Protein CapK (449 aa).

The protein operates within capsule biogenesis; capsule polysaccharide biosynthesis. Functionally, required for the biosynthesis of type 1 capsular polysaccharide. The sequence is that of Protein CapK (capK) from Staphylococcus aureus.